Consider the following 100-residue polypeptide: Urease subunit gamma (100 aa).

The protein belongs to the urease gamma subunit family. As to quaternary structure, heterotrimer of UreA (gamma), UreB (beta) and UreC (alpha) subunits. Three heterotrimers associate to form the active enzyme.

Its subcellular location is the cytoplasm. It catalyses the reaction urea + 2 H2O + H(+) = hydrogencarbonate + 2 NH4(+). It functions in the pathway nitrogen metabolism; urea degradation; CO(2) and NH(3) from urea (urease route): step 1/1. The chain is Urease subunit gamma from Burkholderia mallei (strain NCTC 10247).